The primary structure comprises 331 residues: L-lactate dehydrogenase A chain (331 aa).

NAD(+) is bound by residues 29 to 57 (GMVG…MEDK) and Arg-98. Substrate-binding residues include Arg-105, Asn-137, and Arg-168. Asn-137 is an NAD(+) binding site. Catalysis depends on His-192, which acts as the Proton acceptor. Thr-247 contacts substrate.

Belongs to the LDH/MDH superfamily. LDH family. Homotetramer.

It localises to the cytoplasm. It catalyses the reaction (S)-lactate + NAD(+) = pyruvate + NADH + H(+). It functions in the pathway fermentation; pyruvate fermentation to lactate; (S)-lactate from pyruvate: step 1/1. Interconverts simultaneously and stereospecifically pyruvate and lactate with concomitant interconversion of NADH and NAD(+). This is L-lactate dehydrogenase A chain (ldha) from Harpagifer antarcticus (Antarctic spiny plunderfish).